A 94-amino-acid polypeptide reads, in one-letter code: Small ribosomal subunit protein bS20c (94 aa).

The protein belongs to the bacterial ribosomal protein bS20 family.

It is found in the plastid. The protein resides in the chloroplast. Its function is as follows. Binds directly to 16S ribosomal RNA. The polypeptide is Small ribosomal subunit protein bS20c (Porphyra purpurea (Red seaweed)).